We begin with the raw amino-acid sequence, 169 residues long: Fumarase E (169 aa).

It belongs to the MtlR/FumE family. Homodimer.

It carries out the reaction (S)-malate = fumarate + H2O. Its function is as follows. In vitro catalyzes the addition of water to fumarate, forming malate. Cannot catalyze the reverse reaction. Cannot use the cis-isomer maleate as substrate. The chain is Fumarase E from Shigella flexneri.